A 430-amino-acid polypeptide reads, in one-letter code: Phosphoserine aminotransferase 1, chloroplastic (430 aa).

The transit peptide at M1 to C51 directs the protein to the chloroplast. V52 bears the N-acetylvaline mark. R111 contributes to the L-glutamate binding site. Pyridoxal 5'-phosphate contacts are provided by residues A145 to T146, W171, T221, D241, and Q264. An N6-(pyridoxal phosphate)lysine modification is found at K265. N306–T307 lines the pyridoxal 5'-phosphate pocket.

The protein belongs to the class-V pyridoxal-phosphate-dependent aminotransferase family. SerC subfamily. As to quaternary structure, homodimer. The cofactor is pyridoxal 5'-phosphate. Ubiquitous, but expressed preferentially in light-grown roots and shoots. Detected in root meristems and in root tissues surrounding the vascular bundle.

It localises to the plastid. The protein resides in the chloroplast. The catalysed reaction is O-phospho-L-serine + 2-oxoglutarate = 3-phosphooxypyruvate + L-glutamate. The enzyme catalyses 4-(phosphooxy)-L-threonine + 2-oxoglutarate = (R)-3-hydroxy-2-oxo-4-phosphooxybutanoate + L-glutamate. The protein operates within amino-acid biosynthesis; L-serine biosynthesis; L-serine from 3-phospho-D-glycerate: step 2/3. It participates in cofactor biosynthesis; pyridoxine 5'-phosphate biosynthesis; pyridoxine 5'-phosphate from D-erythrose 4-phosphate: step 3/5. Its activity is regulated as follows. Inhibited by high concentration of cysteine and by 3-phosphonooxypyruvate. Not inhibited by serine, threonine, valine, glycine, tryptophan and O-acetyl-L-serine. Involved in the plastidial phosphorylated pathway of serine biosynthesis (PPSB). Catalyzes the reversible conversion of 3-phosphohydroxypyruvate to phosphoserine. The polypeptide is Phosphoserine aminotransferase 1, chloroplastic (Arabidopsis thaliana (Mouse-ear cress)).